Here is a 348-residue protein sequence, read N- to C-terminus: Spore wall and anchoring disk complex protein EnP1 (348 aa).

The first 16 residues, 1-16 (MKLLGLLISAFGAINA), serve as a signal peptide directing secretion. 3 N-linked (GlcNAc...) asparagine glycosylation sites follow: Asn47, Asn139, and Asn140. Positions 193 to 198 (PRHGRS) match the HBM1 motif. Positions 248 to 256 (IRKGKDKKC) match the HBM2 motif. The HBM3 motif lies at 322 to 327 (LKKIRG).

It localises to the spore wall. The protein resides in the spore. It is found in the perispore. Its function is as follows. Spore wall protein involved in the adhesion to host cells surface glycoaminoglycans (GAGs). Microsporidian spore adherence is an integral part of activation and host cell infection. This is Spore wall and anchoring disk complex protein EnP1 (EnP1) from Encephalitozoon intestinalis (Microsporidian parasite).